A 142-amino-acid chain; its full sequence is ATP synthase F(0) complex subunit C3, mitochondrial (142 aa).

The N-terminal 67 residues, 1–67 (MFACAKLACT…REFQTSAISR (67 aa)), are a transit peptide targeting the mitochondrion. Residues 83 to 103 (VGVAGSGAGIGTVFGSLIIGY) traverse the membrane as a helical segment. K110 is modified (N6,N6,N6-trimethyllysine). A helical membrane pass occupies residues 118-138 (ILGFALSEAMGLFCLMVAFLI).

Belongs to the ATPase C chain family. F-type ATPases have 2 components, CF(1) - the catalytic core - and CF(0) - the membrane proton channel. CF(1) has five subunits: alpha(3), beta(3), gamma(1), delta(1), epsilon(1). CF(0) has three main subunits: a, b and c. Interacts with TMEM70 and TMEM242. Trimethylated by ATPSCKMT at Lys-110. Methylation is required for proper incorporation of the C subunit into the ATP synthase complex and mitochondrial respiration.

The protein resides in the mitochondrion membrane. Mitochondrial membrane ATP synthase (F(1)F(0) ATP synthase or Complex V) produces ATP from ADP in the presence of a proton gradient across the membrane which is generated by electron transport complexes of the respiratory chain. F-type ATPases consist of two structural domains, F(1) - containing the extramembraneous catalytic core and F(0) - containing the membrane proton channel, linked together by a central stalk and a peripheral stalk. During catalysis, ATP synthesis in the catalytic domain of F(1) is coupled via a rotary mechanism of the central stalk subunits to proton translocation. Part of the complex F(0) domain. A homomeric c-ring of probably 10 subunits is part of the complex rotary element. The polypeptide is ATP synthase F(0) complex subunit C3, mitochondrial (Pongo abelii (Sumatran orangutan)).